The chain runs to 182 residues: Large ribosomal subunit protein uL6 (182 aa).

It belongs to the universal ribosomal protein uL6 family. In terms of assembly, part of the 50S ribosomal subunit.

Functionally, this protein binds to the 23S rRNA, and is important in its secondary structure. It is located near the subunit interface in the base of the L7/L12 stalk, and near the tRNA binding site of the peptidyltransferase center. The protein is Large ribosomal subunit protein uL6 of Caldicellulosiruptor saccharolyticus (strain ATCC 43494 / DSM 8903 / Tp8T 6331).